The primary structure comprises 177 residues: Large ribosomal subunit protein uL16m (177 aa).

The protein belongs to the universal ribosomal protein uL16 family.

Its subcellular location is the mitochondrion. The chain is Large ribosomal subunit protein uL16m (RPL16) from Brassica napus (Rape).